A 402-amino-acid chain; its full sequence is CMP-sialic acid transporter 3 (402 aa).

Residues 1-42 are Cytoplasmic-facing; that stretch reads MSGEVECRVCHAKVQVPMAAAAVSKAYDIHRSSVSSRQRALN. Residues 43-63 form a helical membrane-spanning segment; the sequence is VLLVSGDCVLAGLQPILVYMC. The Lumenal segment spans residues 64–73; the sequence is KVDGKFKFSP. A helical transmembrane segment spans residues 74 to 94; that stretch reads VSVNFLTEITKIIFAIIMLCI. Residues 95–118 are Cytoplasmic-facing; sequence QARRLKVGEKPFLTVSTFMQAARN. The chain crosses the membrane as a helical span at residues 119 to 139; that stretch reads NVLLAVPALFYAINNYMKFVM. At 140 to 146 the chain is on the lumenal side; that stretch reads QLYFNPA. The chain crosses the membrane as a helical span at residues 147–167; sequence TVKMLGNLKVLVIAVLLKVIM. The Cytoplasmic segment spans residues 168-170; the sequence is RRR. Residues 171–191 form a helical membrane-spanning segment; the sequence is FSTIQWEALALLLIGISVNQL. Over 192-202 the chain is Lumenal; that stretch reads KSLPEGSSTLG. Residues 203 to 223 traverse the membrane as a helical segment; the sequence is LPVAAGAYLYTLFFVTVPALA. At 224–243 the chain is on the cytoplasmic side; it reads SVYNEKALKSQFDTSIYLQN. The chain crosses the membrane as a helical span at residues 244 to 264; it reads LFLYGYGAIFNFLGLVITAII. The Lumenal portion of the chain corresponds to 265–280; that stretch reads QGPSSFNILEGHSKAT. The helical transmembrane segment at 281–301 threads the bilayer; the sequence is MFLICNNAAQGILSSFFFKYA. Over 302-321 the chain is Cytoplasmic; that stretch reads DTILKKYSSTIATIFTGVAS. The helical transmembrane segment at 322–342 threads the bilayer; that stretch reads AVLFGHTLTINFVLAISIVII. Residues 343-402 are Lumenal-facing; it reads SMHQYLSNQIKDEVPSSKIEMGDAHEHRSKESVVVNVSDSIATEAKHRHGTDERQPLLPV.

Belongs to the nucleotide-sugar transporter family. CMP-Sialate:CMP antiporter (TC 2.A.7.12) subfamily.

Its subcellular location is the golgi apparatus membrane. Its function is as follows. Sugar transporter involved in the transport of CMP-sialic acid from the cytoplasm into the Golgi. May transport important nucleotide sugars such as CMP-Kdo (2-keto-3-deoxy-D-manno-octulosonic acid) in physiological conditions. This Oryza sativa subsp. indica (Rice) protein is CMP-sialic acid transporter 3.